Here is a 506-residue protein sequence, read N- to C-terminus: Putative amidase (506 aa).

Active-site charge relay system residues include K121 and S196. S220 acts as the Acyl-ester intermediate in catalysis.

Belongs to the amidase family.

It carries out the reaction a monocarboxylic acid amide + H2O = a monocarboxylate + NH4(+). The chain is Putative amidase from Synechocystis sp. (strain ATCC 27184 / PCC 6803 / Kazusa).